Here is a 426-residue protein sequence, read N- to C-terminus: Serine--tRNA ligase (426 aa).

A disordered region spans residues Val103 to Pro129. A compositionally biased stretch (basic and acidic residues) spans Gly114–Arg125. L-serine is bound at residue Thr230–Glu232. Residue Arg261–Glu263 coordinates ATP. Glu284 lines the L-serine pocket. Glu348–Ser351 serves as a coordination point for ATP. An L-serine-binding site is contributed by Ser384.

Belongs to the class-II aminoacyl-tRNA synthetase family. Type-1 seryl-tRNA synthetase subfamily. As to quaternary structure, homodimer. The tRNA molecule binds across the dimer.

Its subcellular location is the cytoplasm. The catalysed reaction is tRNA(Ser) + L-serine + ATP = L-seryl-tRNA(Ser) + AMP + diphosphate + H(+). The enzyme catalyses tRNA(Sec) + L-serine + ATP = L-seryl-tRNA(Sec) + AMP + diphosphate + H(+). It functions in the pathway aminoacyl-tRNA biosynthesis; selenocysteinyl-tRNA(Sec) biosynthesis; L-seryl-tRNA(Sec) from L-serine and tRNA(Sec): step 1/1. Catalyzes the attachment of serine to tRNA(Ser). Is also able to aminoacylate tRNA(Sec) with serine, to form the misacylated tRNA L-seryl-tRNA(Sec), which will be further converted into selenocysteinyl-tRNA(Sec). In Dichelobacter nodosus (strain VCS1703A), this protein is Serine--tRNA ligase.